We begin with the raw amino-acid sequence, 233 residues long: Proteasome subunit beta type-6 (233 aa).

Residues 1–12 (MDLNLDAPHSMG) constitute a propeptide, removed in mature form. The active-site Nucleophile is T13.

It belongs to the peptidase T1B family. In terms of assembly, component of the 20S core complex of the 26S proteasome. The 26S proteasome is composed of a core protease (CP), known as the 20S proteasome, capped at one or both ends by the 19S regulatory particle (RP/PA700). The 20S proteasome core is composed of 28 subunits that are arranged in four stacked rings, resulting in a barrel-shaped structure. The two end rings are each formed by seven alpha subunits, and the two central rings are each formed by seven beta subunits. The catalytic chamber with the active sites is on the inside of the barrel.

It is found in the cytoplasm. The protein localises to the nucleus. It catalyses the reaction Cleavage of peptide bonds with very broad specificity.. Its function is as follows. The proteasome is a multicatalytic proteinase complex which is characterized by its ability to cleave peptides with Arg, Phe, Tyr, Leu, and Glu adjacent to the leaving group at neutral or slightly basic pH. The proteasome has an ATP-dependent proteolytic activity. This chain is Proteasome subunit beta type-6 (PBA1), found in Arabidopsis thaliana (Mouse-ear cress).